Consider the following 427-residue polypeptide: Serine hydroxymethyltransferase (427 aa).

Residues leucine 122 and 126-128 (GHL) each bind (6S)-5,6,7,8-tetrahydrofolate. Lysine 231 carries the post-translational modification N6-(pyridoxal phosphate)lysine. 355–357 (SPF) provides a ligand contact to (6S)-5,6,7,8-tetrahydrofolate.

The protein belongs to the SHMT family. In terms of assembly, homodimer. The cofactor is pyridoxal 5'-phosphate.

The protein resides in the cytoplasm. It carries out the reaction (6R)-5,10-methylene-5,6,7,8-tetrahydrofolate + glycine + H2O = (6S)-5,6,7,8-tetrahydrofolate + L-serine. Its pathway is one-carbon metabolism; tetrahydrofolate interconversion. It functions in the pathway amino-acid biosynthesis; glycine biosynthesis; glycine from L-serine: step 1/1. Its function is as follows. Catalyzes the reversible interconversion of serine and glycine with tetrahydrofolate (THF) serving as the one-carbon carrier. This reaction serves as the major source of one-carbon groups required for the biosynthesis of purines, thymidylate, methionine, and other important biomolecules. Also exhibits THF-independent aldolase activity toward beta-hydroxyamino acids, producing glycine and aldehydes, via a retro-aldol mechanism. The polypeptide is Serine hydroxymethyltransferase (Nostoc sp. (strain PCC 7120 / SAG 25.82 / UTEX 2576)).